A 265-amino-acid chain; its full sequence is Mlc titration factor A (265 aa).

4 residues coordinate Zn(2+): His111, His148, His152, and Glu211.

The protein belongs to the MtfA family. In terms of assembly, interacts with Mlc. Zn(2+) serves as cofactor.

It localises to the cytoplasm. Functionally, involved in the modulation of the activity of the glucose-phosphotransferase system (glucose-PTS). Interacts with the transcriptional repressor Mlc, preventing its interaction with DNA and leading to the modulation of expression of genes regulated by Mlc, including ptsG, which encodes the PTS system glucose-specific EIICB component. In terms of biological role, shows zinc-dependent metallopeptidase activity. This chain is Mlc titration factor A, found in Salmonella typhi.